The primary structure comprises 148 residues: Putative nickel-responsive regulator (148 aa).

Ni(2+)-binding residues include histidine 88, histidine 99, histidine 101, and cysteine 107.

Belongs to the transcriptional regulatory CopG/NikR family. Homotetramer. It depends on Ni(2+) as a cofactor.

Functionally, transcriptional regulator. The protein is Putative nickel-responsive regulator of Helicobacter pylori (strain J99 / ATCC 700824) (Campylobacter pylori J99).